A 265-amino-acid polypeptide reads, in one-letter code: MQIDTKTNTNKTTAQEWKSFAFVVCIALLIRILIMEPFTVPTGSMKATILENDYIFSTKYSYGYSNYSLSFFDFIPLFKGRIFACEPERGDIVVFRPPNDMSVRYIKRLIGLPGDKIQLIDDIIYINDKKIERTEVGTYISEEGRKYLKFKETLPNGRTYFSYKLAPIFGVISDDRYGNTDVFYVPEGKYFFLGDNRDQSNDSRVNLGFVPFENFIAKAQFIWFSTKITWWDNDIGVINLILKLKPWIESVRLNRIFRNLYNTDE.

Topologically, residues 1-19 (MQIDTKTNTNKTTAQEWKS) are cytoplasmic. The chain crosses the membrane as a helical span at residues 20 to 40 (FAFVVCIALLIRILIMEPFTV). At 41 to 265 (PTGSMKATIL…IFRNLYNTDE (225 aa)) the chain is on the periplasmic side. Active-site residues include serine 44 and lysine 107.

This sequence belongs to the peptidase S26 family.

It is found in the cell inner membrane. It carries out the reaction Cleavage of hydrophobic, N-terminal signal or leader sequences from secreted and periplasmic proteins.. This is Signal peptidase I (lepB) from Rickettsia canadensis (strain McKiel).